The chain runs to 319 residues: Formimidoylglutamase (319 aa).

Mn(2+) is bound by residues His-131, Asp-154, His-156, Asp-158, Cys-248, and Asp-250.

This sequence belongs to the arginase family. Mn(2+) serves as cofactor.

The catalysed reaction is N-formimidoyl-L-glutamate + H2O = formamide + L-glutamate. It functions in the pathway amino-acid degradation; L-histidine degradation into L-glutamate; L-glutamate from N-formimidoyl-L-glutamate (hydrolase route): step 1/1. Functionally, catalyzes the conversion of N-formimidoyl-L-glutamate to L-glutamate and formamide. This is Formimidoylglutamase from Legionella pneumophila (strain Paris).